The primary structure comprises 565 residues: uncharacterized protein (565 aa).

The next 5 helical transmembrane spans lie at 4 to 26 (FVQF…AVWV), 33 to 55 (GYGL…VGAA), 68 to 90 (SLLY…VNAL), 97 to 119 (YAIL…TQFF), and 162 to 184 (ISAM…IILL). 2 RCK C-terminal domains span residues 210–295 (PNVD…LGPE) and 296–379 (VPDA…IFGV). The next 5 membrane-spanning stretches (helical) occupy residues 389–411 (LLTL…PAFG), 415–432 (GLGN…VSSI), 453–472 (LGLI…DLLT), 482–504 (IFIV…GFHI), and 539–561 (WLGF…YFAM).

This sequence belongs to the AAE transporter (TC 2.A.81) family.

The protein localises to the cell membrane. This is an uncharacterized protein from Bordetella bronchiseptica (strain ATCC BAA-588 / NCTC 13252 / RB50) (Alcaligenes bronchisepticus).